Here is a 576-residue protein sequence, read N- to C-terminus: Keratin, type II cytoskeletal 5 (576 aa).

Residues 1-163 (MSRQSSVSFR…DPTIQRVRTE (163 aa)) form a head region. A phosphoserine mark is found at serine 5, serine 8, serine 16, and serine 21. Phosphothreonine; by CDK1 is present on threonine 24. Serine 26, serine 36, serine 46, serine 60, serine 67, serine 71, serine 74, and serine 78 each carry phosphoserine. Threonine 147 bears the Phosphothreonine; by CDK1 mark. Threonine 162 bears the Phosphothreonine; by AURKB mark. The segment at 164-199 (EREQIKTLNNKFASFIDKVRFLEQQNKVLDTKWTLL) is coil 1A. The region spanning 164–477 (EREQIKTLNN…KLLEGEECRL (314 aa)) is the IF rod domain. A linker 1 region spans residues 200-218 (QEQGTKTIKQNLDPLFEQY). The coil 1B stretch occupies residues 219–311 (INNLRRQLDG…FFDAELSQMQ (93 aa)). The linker 12 stretch occupies residues 312–334 (THVSDTSVVLSMDNNRSLDLDSI). The tract at residues 335 to 473 (IAEVKAQYED…ATYRKLLEGE (139 aa)) is coil 2. The segment at 474 to 576 (ECRLSGEGVG…TSSSRRSFKS (103 aa)) is tail. Arginine 527 is modified (omega-N-methylarginine). A compositionally biased stretch (gly residues) spans 540-557 (GFSASSGQGGGFSSGGGS). The segment at 540–576 (GFSASSGQGGGFSSGGGSSSSVKFVSTTSSSRRSFKS) is disordered. Over residues 558–576 (SSSVKFVSTTSSSRRSFKS) the composition is skewed to low complexity.

This sequence belongs to the intermediate filament family. As to quaternary structure, heterodimer of a type I and a type II keratin. Heterodimer with type I keratin KRT25 leading to the formation of keratin intermediate filament (KIF) network. Forms a heterodimer (via 2B domains) with KRT14 (via 2B domains). Interacts with TCHP. Interacts with EPPK1. Interacts with AMELX. Interacts with PKP1 (via N-terminus) and PKP2. Phosphorylated by CDK1, AURKB and Rho-kinase, phosphorylation is regulated by the cell cycle. Thr-24 phosphorylation, mediated by CDK1, peaks during prometaphase or metaphase cells with phosphorylated filamentous structures evident throughout the cytoplasm during early mitosis. CDK1 phosphorylates Thr-24 in mitotic cells at the site of injury. In terms of processing, O-glycosylated. Expressed in the epidermis (at protein level) and testis (within pachytene spermatocytes).

Its subcellular location is the cytoplasm. Its function is as follows. Required for the formation of keratin intermediate filaments in the basal epidermis and maintenance of the skin barrier in response to mechanical stress. Regulates the recruitment of Langerhans cells to the epidermis, potentially by modulation of the abundance of macrophage chemotactic cytokines, macrophage inflammatory cytokines and CTNND1 localization in keratinocytes. This Rattus norvegicus (Rat) protein is Keratin, type II cytoskeletal 5.